A 350-amino-acid polypeptide reads, in one-letter code: MAAPSSLLLAALLWVPAEALSCYGDSGRPVDWFVVYKLPANSGSGDKPWKGLMYKYMDQNSEGWQDGVGHIDSKDGAVGLTLQPLYQKNSSQLAFLLYNDQPPKSSSAQDSSSRGHTKGVLLLDQEGGFWLVHSVPRFPSPASSGAYSWPPNARTYGQTLLCVSLPFSQFPGIGKQLTYTYPLVYDHKLEGIFAQKLPDLEEVTKGHHVLREPWNSSVILTSRAGTTFQSFAKFGKFGDDLYSGWLAAALGTNLQVQFWPNSPGILPSNCSGTHKILDVTETGFPGPSGPTFNATEDHSKWCVAPEGPWVCVGDMNRNKRETHRGGGTLCTQVPALWKAFRSLVKACKPC.

Positions 1-19 (MAAPSSLLLAALLWVPAEA) are cleaved as a signal peptide. Cys22 and Cys162 are disulfide-bonded. 4 N-linked (GlcNAc...) asparagine glycosylation sites follow: Asn89, Asn215, Asn269, and Asn293. 2 disulfides stabilise this stretch: Cys270–Cys350 and Cys311–Cys330. His298 is a catalytic residue.

It belongs to the DNase II family. Ubiquitous.

Its subcellular location is the lysosome. It catalyses the reaction Endonucleolytic cleavage to nucleoside 3'-phosphates and 3'-phosphooligonucleotide end-products.. Functionally, hydrolyzes DNA under acidic conditions with a preference for double-stranded DNA. Plays a major role in the clearance of nucleic acids generated through apoptosis, hence preventing autoinflammation. Necessary for proper fetal development and for definitive erythropoiesis in fetal liver and bone marrow, where it degrades nuclear DNA expelled from erythroid precursor cells. This Rattus norvegicus (Rat) protein is Deoxyribonuclease-2-alpha (Dnase2).